The primary structure comprises 349 residues: Peroxisomal acyl-coenzyme A thioester hydrolase 1 (349 aa).

Catalysis depends on charge relay system residues aspartate 259, serine 282, and glutamine 333. The short motif at 347 to 349 (AKF) is the Microbody targeting signal element.

Belongs to the C/M/P thioester hydrolase family.

It is found in the peroxisome. It catalyses the reaction hexadecanoyl-CoA + H2O = hexadecanoate + CoA + H(+). Its function is as follows. Acyl-coenzyme A (acyl-CoA) thioesterases are a group of enzymes that catalyze the hydrolysis of acyl-CoAs to the free fatty acid and coenzyme A (CoASH), providing the potential to regulate intracellular levels of acyl-CoAs, free fatty acids and CoASH. Contributes to growth on fatty acids. The polypeptide is Peroxisomal acyl-coenzyme A thioester hydrolase 1 (TES1) (Saccharomyces cerevisiae (strain ATCC 204508 / S288c) (Baker's yeast)).